We begin with the raw amino-acid sequence, 213 residues long: Redox-sensing transcriptional repressor Rex (213 aa).

Residues 17 to 56 (LYYRIFKRFHSENIEKASSKQIAEAIGIDSATVRRDFSYF) constitute a DNA-binding region (H-T-H motif). An NAD(+)-binding site is contributed by 91–96 (GVGNIG).

This sequence belongs to the transcriptional regulatory Rex family. As to quaternary structure, homodimer.

It is found in the cytoplasm. Functionally, modulates transcription in response to changes in cellular NADH/NAD(+) redox state. The polypeptide is Redox-sensing transcriptional repressor Rex (Streptococcus mutans serotype c (strain ATCC 700610 / UA159)).